The primary structure comprises 29 residues: Kalata-B15 (29 aa).

Residues 1–29 (GLPVCGESCFGGSCYTPGCSCTWPICTRD) constitute a cross-link (cyclopeptide (Gly-Asp)). Disulfide bonds link C5-C19, C9-C21, and C14-C26.

This is a cyclic peptide.

Its function is as follows. Probably participates in a plant defense mechanism. This Oldenlandia affinis protein is Kalata-B15.